The sequence spans 598 residues: Protein HIGH CHLOROPHYLL FLUORESCENCE PHENOTYPE 173, chloroplastic (598 aa).

Residues 1–79 (MVGSIVGSNM…ITTKESEETV (79 aa)) constitute a chloroplast transit peptide. Residues 42–106 (VIPRAQSSSS…PTLKLDDVNP (65 aa)) are disordered. Over residues 73–84 (KESEETVAKKLD) the composition is skewed to basic and acidic residues. Residues 87 to 97 (PPSPQSPPSPP) show a composition bias toward pro residues.

This sequence belongs to the NmrA-type oxidoreductase family. Component of a high molecular weight complex containing psbA mRNA, OHP1, OHP2 and HCF244, and PSII core proteins D1/D2, HCF136 and HCF173. Interacts with LPE1.

Its subcellular location is the plastid. The protein resides in the chloroplast membrane. It localises to the chloroplast thylakoid membrane. The protein localises to the chloroplast stroma. In terms of biological role, auxiliary factor required, together with HCF244, for the biogenesis of photosystem II (PSII), especially for the synthesis of the reaction center proteins (e.g. D1), via the regulation of the corresponding mRNA (e.g. psbA) translation initiation (ribosomal loading) and stabilization. The chain is Protein HIGH CHLOROPHYLL FLUORESCENCE PHENOTYPE 173, chloroplastic from Arabidopsis thaliana (Mouse-ear cress).